The sequence spans 660 residues: ATPase-like fidgetin (660 aa).

Disordered regions lie at residues 141-186 and 209-334; these read KQIY…EDPF and ALSS…ADSK. The span at 145–161 shows a compositional bias: low complexity; sequence SKHSPPSTSTSSIVSSS. Ser-177 is subject to Phosphoserine. The segment covering 213 to 239 has biased composition (polar residues); it reads DTGRSATMNSTTFPTAMKSQSTTKPTL. A compositionally biased stretch (low complexity) spans 240–255; sequence SNSVSSPSIQVSNNQN. Over residues 301–313 the composition is skewed to polar residues; it reads LNSSHDTLGSSTR. The segment covering 314-333 has biased composition (low complexity); that stretch reads PSSADTAGSPATSPPATADS. 419 to 426 contributes to the ATP binding site; the sequence is GPPGTGKT.

Belongs to the AAA ATPase family.

It is found in the nucleus. This is ATPase-like fidgetin (alf1) from Schizosaccharomyces pombe (strain 972 / ATCC 24843) (Fission yeast).